The sequence spans 130 residues: Small ribosomal subunit protein uS9 (130 aa).

This sequence belongs to the universal ribosomal protein uS9 family.

The polypeptide is Small ribosomal subunit protein uS9 (Geobacillus sp. (strain WCH70)).